The sequence spans 544 residues: Chaperonin GroEL (544 aa).

ATP is bound by residues 30-33, lysine 51, 87-91, glycine 415, and aspartate 495; these read TLGP and DGTTT.

This sequence belongs to the chaperonin (HSP60) family. In terms of assembly, forms a cylinder of 14 subunits composed of two heptameric rings stacked back-to-back. Interacts with the co-chaperonin GroES.

The protein resides in the cytoplasm. It catalyses the reaction ATP + H2O + a folded polypeptide = ADP + phosphate + an unfolded polypeptide.. Together with its co-chaperonin GroES, plays an essential role in assisting protein folding. The GroEL-GroES system forms a nano-cage that allows encapsulation of the non-native substrate proteins and provides a physical environment optimized to promote and accelerate protein folding. This chain is Chaperonin GroEL, found in Methylobacillus flagellatus (strain ATCC 51484 / DSM 6875 / VKM B-1610 / KT).